An 865-amino-acid polypeptide reads, in one-letter code: Protein translocase subunit SecA (865 aa).

ATP-binding positions include Gln85, 103–107 (GEGKT), and Asp505. Zn(2+) contacts are provided by Cys847, Cys849, Cys858, and His859.

This sequence belongs to the SecA family. Monomer and homodimer. Part of the essential Sec protein translocation apparatus which comprises SecA, SecYEG and auxiliary proteins SecDF. Other proteins may also be involved. Zn(2+) is required as a cofactor.

The protein resides in the cell membrane. The protein localises to the cytoplasm. The enzyme catalyses ATP + H2O + cellular proteinSide 1 = ADP + phosphate + cellular proteinSide 2.. In terms of biological role, part of the Sec protein translocase complex. Interacts with the SecYEG preprotein conducting channel. Has a central role in coupling the hydrolysis of ATP to the transfer of proteins into and across the cell membrane, serving as an ATP-driven molecular motor driving the stepwise translocation of polypeptide chains across the membrane. The protein is Protein translocase subunit SecA of Lactococcus lactis subsp. lactis (strain IL1403) (Streptococcus lactis).